We begin with the raw amino-acid sequence, 637 residues long: Penicillin-binding protein 1A (637 aa).

Positions 62 to 224 (LIADLGSERR…NQYDPYSHPE (163 aa)) are transglycosylase. The active-site Proton donor; for transglycosylase activity is the glutamate 91. The transpeptidase stretch occupies residues 298-612 (EVYTNVDSKV…RLTPIVGDGF (315 aa)). Serine 371 acts as the Acyl-ester intermediate; for transpeptidase activity in catalysis.

This sequence in the N-terminal section; belongs to the glycosyltransferase 51 family. It in the C-terminal section; belongs to the transpeptidase family.

It localises to the secreted. The enzyme catalyses [GlcNAc-(1-&gt;4)-Mur2Ac(oyl-L-Ala-gamma-D-Glu-L-Lys-D-Ala-D-Ala)](n)-di-trans,octa-cis-undecaprenyl diphosphate + beta-D-GlcNAc-(1-&gt;4)-Mur2Ac(oyl-L-Ala-gamma-D-Glu-L-Lys-D-Ala-D-Ala)-di-trans,octa-cis-undecaprenyl diphosphate = [GlcNAc-(1-&gt;4)-Mur2Ac(oyl-L-Ala-gamma-D-Glu-L-Lys-D-Ala-D-Ala)](n+1)-di-trans,octa-cis-undecaprenyl diphosphate + di-trans,octa-cis-undecaprenyl diphosphate + H(+). It catalyses the reaction Preferential cleavage: (Ac)2-L-Lys-D-Ala-|-D-Ala. Also transpeptidation of peptidyl-alanyl moieties that are N-acyl substituents of D-alanine.. It functions in the pathway cell wall biogenesis; peptidoglycan biosynthesis. Its function is as follows. Cell wall formation. This is Penicillin-binding protein 1A (ponA) from Streptococcus oralis.